A 119-amino-acid chain; its full sequence is Chymotrypsin inhibitor WCI (119 aa).

Intrachain disulfides connect C6-C55, C20-C44, C29-C87, C45-C105, and C57-C116.

It is found in the secreted. Inhibits bovine, insect and wheat chymotrypsins. Inhibits bovine chymotrypsin with Ki of 0.6 nM. Does not inhibit human or wheat alpha-amylases, bovine pancreatic trypsin, or trypsin-like activity isolated from wheat. This Triticum aestivum (Wheat) protein is Chymotrypsin inhibitor WCI.